The following is a 441-amino-acid chain: Protein arginine methyltransferase NDUFAF7, mitochondrial (441 aa).

The N-terminal 46 residues, 1 to 46 (MSVLLRSGLGPLCAVARAAIPFIWRGKYFSSGNEPAENPVTPMLRH), are a transit peptide targeting the mitochondrion.

This sequence belongs to the NDUFAF7 family. As to quaternary structure, interacts with NDUFS2.

It localises to the mitochondrion. The enzyme catalyses L-arginyl-[protein] + 2 S-adenosyl-L-methionine = N(omega),N(omega)'-dimethyl-L-arginyl-[protein] + 2 S-adenosyl-L-homocysteine + 2 H(+). In terms of biological role, arginine methyltransferase involved in the assembly or stability of mitochondrial NADH:ubiquinone oxidoreductase complex (complex I). Acts by mediating symmetric dimethylation of 'Arg-118' of NDUFS2 after it assembles into the complex I, stabilizing the early intermediate complex. The sequence is that of Protein arginine methyltransferase NDUFAF7, mitochondrial from Homo sapiens (Human).